The following is a 216-amino-acid chain: Cytochrome c oxidase subunit 2 (216 aa).

Residues 1 to 8 are Mitochondrial intermembrane-facing; that stretch reads LGLQNATS. Residues 9–39 traverse the membrane as a helical segment; that stretch reads PIMEELIAFHDHALMIIFLISSLVLYIISLM. The Mitochondrial matrix portion of the chain corresponds to 40-53; sequence LTTKLTHTSTMNAQ. A helical transmembrane segment spans residues 54 to 81; the sequence is EIEMIWTILPAVILIMIALPSLRILYMT. Residues 82-216 lie on the Mitochondrial intermembrane side of the membrane; it reads DEFNKPYLTL…FIYFQDFEVW (135 aa). Positions 155, 190, 192, 194, 198, and 201 each coordinate Cu cation. Glu-192 is a Mg(2+) binding site.

Belongs to the cytochrome c oxidase subunit 2 family. As to quaternary structure, component of the cytochrome c oxidase (complex IV, CIV), a multisubunit enzyme composed of 14 subunits. The complex is composed of a catalytic core of 3 subunits MT-CO1, MT-CO2 and MT-CO3, encoded in the mitochondrial DNA, and 11 supernumerary subunits COX4I, COX5A, COX5B, COX6A, COX6B, COX6C, COX7A, COX7B, COX7C, COX8 and NDUFA4, which are encoded in the nuclear genome. The complex exists as a monomer or a dimer and forms supercomplexes (SCs) in the inner mitochondrial membrane with NADH-ubiquinone oxidoreductase (complex I, CI) and ubiquinol-cytochrome c oxidoreductase (cytochrome b-c1 complex, complex III, CIII), resulting in different assemblies (supercomplex SCI(1)III(2)IV(1) and megacomplex MCI(2)III(2)IV(2)). Found in a complex with TMEM177, COA6, COX18, COX20, SCO1 and SCO2. Interacts with TMEM177 in a COX20-dependent manner. Interacts with COX20. Interacts with COX16. It depends on Cu cation as a cofactor.

It is found in the mitochondrion inner membrane. The catalysed reaction is 4 Fe(II)-[cytochrome c] + O2 + 8 H(+)(in) = 4 Fe(III)-[cytochrome c] + 2 H2O + 4 H(+)(out). Its function is as follows. Component of the cytochrome c oxidase, the last enzyme in the mitochondrial electron transport chain which drives oxidative phosphorylation. The respiratory chain contains 3 multisubunit complexes succinate dehydrogenase (complex II, CII), ubiquinol-cytochrome c oxidoreductase (cytochrome b-c1 complex, complex III, CIII) and cytochrome c oxidase (complex IV, CIV), that cooperate to transfer electrons derived from NADH and succinate to molecular oxygen, creating an electrochemical gradient over the inner membrane that drives transmembrane transport and the ATP synthase. Cytochrome c oxidase is the component of the respiratory chain that catalyzes the reduction of oxygen to water. Electrons originating from reduced cytochrome c in the intermembrane space (IMS) are transferred via the dinuclear copper A center (CU(A)) of subunit 2 and heme A of subunit 1 to the active site in subunit 1, a binuclear center (BNC) formed by heme A3 and copper B (CU(B)). The BNC reduces molecular oxygen to 2 water molecules using 4 electrons from cytochrome c in the IMS and 4 protons from the mitochondrial matrix. The protein is Cytochrome c oxidase subunit 2 (MT-CO2) of Callimico goeldii (Goeldi's marmoset).